The primary structure comprises 320 residues: Methionyl-tRNA formyltransferase (320 aa).

(6S)-5,6,7,8-tetrahydrofolate is bound at residue S111–P114.

It belongs to the Fmt family.

It carries out the reaction L-methionyl-tRNA(fMet) + (6R)-10-formyltetrahydrofolate = N-formyl-L-methionyl-tRNA(fMet) + (6S)-5,6,7,8-tetrahydrofolate + H(+). Attaches a formyl group to the free amino group of methionyl-tRNA(fMet). The formyl group appears to play a dual role in the initiator identity of N-formylmethionyl-tRNA by promoting its recognition by IF2 and preventing the misappropriation of this tRNA by the elongation apparatus. The polypeptide is Methionyl-tRNA formyltransferase (Bifidobacterium adolescentis (strain ATCC 15703 / DSM 20083 / NCTC 11814 / E194a)).